We begin with the raw amino-acid sequence, 253 residues long: Tyrosine recombinase XerD-like (253 aa).

In terms of domain architecture, Core-binding (CB) spans 8 to 81; it reads KQLTTQITNF…AVNQFLLYLY (74 aa). The Tyr recombinase domain maps to 93 to 253; sequence SETAPLPSQQ…PVTLEKYYKT (161 aa). Catalysis depends on residues Lys-157 and Arg-218. Tyr-250 serves as the catalytic O-(3'-phospho-DNA)-tyrosine intermediate.

Belongs to the 'phage' integrase family. XerD-like subfamily.

It is found in the cytoplasm. In terms of biological role, putative tyrosine recombinase. Not involved in the cutting and rejoining of the recombining DNA molecules on dif(SL) site. This is Tyrosine recombinase XerD-like from Streptococcus thermophilus (strain CNRZ 1066).